A 235-amino-acid polypeptide reads, in one-letter code: Small ribosomal subunit protein eS4 (235 aa).

Residues 38–99 (VTLLSIIRDY…GESYRVVYND (62 aa)) form the S4 RNA-binding domain.

The protein belongs to the eukaryotic ribosomal protein eS4 family.

The polypeptide is Small ribosomal subunit protein eS4 (rps4e) (Thermoplasma acidophilum (strain ATCC 25905 / DSM 1728 / JCM 9062 / NBRC 15155 / AMRC-C165)).